Consider the following 318-residue polypeptide: Bifunctional protein FolD 3 (318 aa).

NADP(+)-binding positions include 173–175 (GRS) and Ile242.

The protein belongs to the tetrahydrofolate dehydrogenase/cyclohydrolase family. In terms of assembly, homodimer.

It carries out the reaction (6R)-5,10-methylene-5,6,7,8-tetrahydrofolate + NADP(+) = (6R)-5,10-methenyltetrahydrofolate + NADPH. The catalysed reaction is (6R)-5,10-methenyltetrahydrofolate + H2O = (6R)-10-formyltetrahydrofolate + H(+). The protein operates within one-carbon metabolism; tetrahydrofolate interconversion. In terms of biological role, catalyzes the oxidation of 5,10-methylenetetrahydrofolate to 5,10-methenyltetrahydrofolate and then the hydrolysis of 5,10-methenyltetrahydrofolate to 10-formyltetrahydrofolate. The polypeptide is Bifunctional protein FolD 3 (Rubrobacter xylanophilus (strain DSM 9941 / JCM 11954 / NBRC 16129 / PRD-1)).